Consider the following 86-residue polypeptide: Small ribosomal subunit protein bS20 (86 aa).

This sequence belongs to the bacterial ribosomal protein bS20 family.

Its function is as follows. Binds directly to 16S ribosomal RNA. This chain is Small ribosomal subunit protein bS20, found in Rhodococcus jostii (strain RHA1).